A 338-amino-acid polypeptide reads, in one-letter code: Heat-inducible transcription repressor HrcA (338 aa).

Belongs to the HrcA family.

Functionally, negative regulator of class I heat shock genes (grpE-dnaK-dnaJ and groELS operons). Prevents heat-shock induction of these operons. The sequence is that of Heat-inducible transcription repressor HrcA from Streptomyces avermitilis (strain ATCC 31267 / DSM 46492 / JCM 5070 / NBRC 14893 / NCIMB 12804 / NRRL 8165 / MA-4680).